The following is a 130-amino-acid chain: Small ribosomal subunit protein uS8 (130 aa).

It belongs to the universal ribosomal protein uS8 family. As to quaternary structure, part of the 30S ribosomal subunit. Contacts proteins S5 and S12.

Functionally, one of the primary rRNA binding proteins, it binds directly to 16S rRNA central domain where it helps coordinate assembly of the platform of the 30S subunit. The polypeptide is Small ribosomal subunit protein uS8 (Pseudomonas fluorescens (strain SBW25)).